Reading from the N-terminus, the 228-residue chain is Ribose-5-phosphate isomerase A (228 aa).

Substrate contacts are provided by residues 32 to 35 (TGST), 85 to 88 (DGAD), and 98 to 101 (KGGG). The active-site Proton acceptor is E107. Residue K125 participates in substrate binding.

The protein belongs to the ribose 5-phosphate isomerase family. In terms of assembly, homodimer.

The catalysed reaction is aldehydo-D-ribose 5-phosphate = D-ribulose 5-phosphate. It functions in the pathway carbohydrate degradation; pentose phosphate pathway; D-ribose 5-phosphate from D-ribulose 5-phosphate (non-oxidative stage): step 1/1. Its function is as follows. Catalyzes the reversible conversion of ribose-5-phosphate to ribulose 5-phosphate. This is Ribose-5-phosphate isomerase A from Cupriavidus pinatubonensis (strain JMP 134 / LMG 1197) (Cupriavidus necator (strain JMP 134)).